A 228-amino-acid polypeptide reads, in one-letter code: Sensory transduction protein RegX3 (228 aa).

A Response regulatory domain is found at 3 to 116 (SVLIVEDEES…ELIARIRAVL (114 aa)). A 4-aspartylphosphate modification is found at Asp-52. A DNA-binding region (ompR/PhoB-type) is located at residues 129-228 (DGVLEAGPVR…VRGLGYKLEG (100 aa)).

Phosphorylated by SenX3.

Its function is as follows. Member of the two-component regulatory system SenX3/RegX3 involved in stress response. The system is involved in phosphate starvation response. Once phosphorylated by SenX3, activates the expression of the alkaline phosphatase phoA, the high-affinity phosphate transporter pstSCAB, phnDCE, phnF and senX3. May act as a negative regulator of NhaA. Acts by binding to a DNA motif consisting of an inverted repeat. The chain is Sensory transduction protein RegX3 from Mycolicibacterium smegmatis (strain ATCC 700084 / mc(2)155) (Mycobacterium smegmatis).